Consider the following 147-residue polypeptide: Large ribosomal subunit protein uL15 (147 aa).

The tract at residues 1-42 (MTIKVHHLRPAPGAKTAKTRVGRGEGSKGKTAGRGTKGSKAR) is disordered.

Belongs to the universal ribosomal protein uL15 family. As to quaternary structure, part of the 50S ribosomal subunit.

Binds to the 23S rRNA. The polypeptide is Large ribosomal subunit protein uL15 (Salinispora arenicola (strain CNS-205)).